The primary structure comprises 263 residues: uncharacterized protein (263 aa).

This is an uncharacterized protein from Archaeoglobus fulgidus (strain ATCC 49558 / DSM 4304 / JCM 9628 / NBRC 100126 / VC-16).